A 955-amino-acid polypeptide reads, in one-letter code: Disintegrin and metalloproteinase domain-containing protein 19 (955 aa).

Positions 1 to 25 (MPGGAGAARLCLLAFALQPLRPRAA) are cleaved as a signal peptide. Positions 26-202 (REPGWTRGSE…QTKKRPRRMK (177 aa)) are excised as a propeptide. The short motif at 130-137 (STCRGIRG) is the Cysteine switch element. Position 132 (Cys-132) interacts with Zn(2+). The N-linked (GlcNAc...) asparagine glycan is linked to Asn-144. The Extracellular portion of the chain corresponds to 203 to 699 (REDLNSMKYV…IDSGPMPPES (497 aa)). Residues 210–408 (KYVELYLVAD…GGGMCLSNMP (199 aa)) form the Peptidase M12B domain. Disulfide bonds link Cys-320-Cys-403, Cys-360-Cys-387, and Cys-361-Cys-370. His-345 is a Zn(2+) binding site. Glu-346 is an active-site residue. Zn(2+) is bound by residues His-349 and His-355. In terms of domain architecture, Disintegrin spans 416–502 (GRRCGNGYLE…HCPTNFYQMD (87 aa)). Residues Asn-444 and Asn-447 are each glycosylated (N-linked (GlcNAc...) asparagine). The cysteines at positions 474 and 494 are disulfide-linked. Asn-645 carries N-linked (GlcNAc...) asparagine glycosylation. The EGF-like domain occupies 650-682 (ETEGCGKKCNGHGVCNNNQNCHCLPGWAPPFCN). Cystine bridges form between Cys-654–Cys-664, Cys-658–Cys-670, and Cys-672–Cys-681. The helical transmembrane segment at 700 to 720 (VGPVVAGVLVAILVLAVLMLM) threads the bilayer. Topologically, residues 721–955 (YYCCRQNNKL…AKHSCFLVPA (235 aa)) are cytoplasmic. Residues 753–771 (SQNSGTGHANPTFKLQTPQ) show a composition bias toward polar residues. Residues 753-917 (SQNSGTGHAN…LKVKAGTRGL (165 aa)) are disordered. Pro residues-rich tracts occupy residues 787-796 (SQPPPRPPPD) and 833-844 (RPPPSRPIPPAP). An SH3-binding motif is present at residues 833–844 (RPPPSRPIPPAP).

In terms of assembly, interacts with SH3PXD2A. Zn(2+) is required as a cofactor. Post-translationally, the precursor is cleaved by a furin endopeptidase. As to expression, expressed in many normal organ tissues and several cancer cell lines.

Its subcellular location is the membrane. Functionally, participates in the proteolytic processing of beta-type neuregulin isoforms which are involved in neurogenesis and synaptogenesis, suggesting a regulatory role in glial cell. Also cleaves alpha-2 macroglobulin. May be involved in osteoblast differentiation and/or osteoblast activity in bone. This Homo sapiens (Human) protein is Disintegrin and metalloproteinase domain-containing protein 19 (ADAM19).